The chain runs to 247 residues: Protein NipSnap homolog 3A (247 aa).

N6-acetyllysine is present on residues Lys-48 and Lys-166.

Belongs to the NipSnap family. As to quaternary structure, interacts with the Salmonella typhimurium virulence protein spiC. Ubiquitous. Highly expressed in liver, kidney and muscle. Expressed at intermediate level in brain, heart, colon, thymus, kidney, small intestine, placenta, lung, leukocytes and spleen.

It is found in the cytoplasm. It localises to the cytosol. In Homo sapiens (Human), this protein is Protein NipSnap homolog 3A (NIPSNAP3A).